The primary structure comprises 135 residues: Large ribosomal subunit protein uL22 (135 aa).

The interval 112–135 (KKPEKKKLKAKSAKTEEAPKAAEV) is disordered. Basic and acidic residues predominate over residues 124-135 (AKTEEAPKAAEV).

Belongs to the universal ribosomal protein uL22 family. As to quaternary structure, part of the 50S ribosomal subunit.

Functionally, this protein binds specifically to 23S rRNA; its binding is stimulated by other ribosomal proteins, e.g. L4, L17, and L20. It is important during the early stages of 50S assembly. It makes multiple contacts with different domains of the 23S rRNA in the assembled 50S subunit and ribosome. Its function is as follows. The globular domain of the protein is located near the polypeptide exit tunnel on the outside of the subunit, while an extended beta-hairpin is found that lines the wall of the exit tunnel in the center of the 70S ribosome. The protein is Large ribosomal subunit protein uL22 of Brachyspira hyodysenteriae (strain ATCC 49526 / WA1).